The primary structure comprises 163 residues: NADH-quinone oxidoreductase subunit I (163 aa).

2 consecutive 4Fe-4S ferredoxin-type domains span residues 54-84 (LRRY…IDSA) and 94-123 (TRYD…ETHI). Residues cysteine 64, cysteine 67, cysteine 70, cysteine 74, cysteine 103, cysteine 106, cysteine 109, and cysteine 113 each coordinate [4Fe-4S] cluster.

Belongs to the complex I 23 kDa subunit family. As to quaternary structure, NDH-1 is composed of 14 different subunits. Subunits NuoA, H, J, K, L, M, N constitute the membrane sector of the complex. Requires [4Fe-4S] cluster as cofactor.

Its subcellular location is the cell inner membrane. The enzyme catalyses a quinone + NADH + 5 H(+)(in) = a quinol + NAD(+) + 4 H(+)(out). NDH-1 shuttles electrons from NADH, via FMN and iron-sulfur (Fe-S) centers, to quinones in the respiratory chain. The immediate electron acceptor for the enzyme in this species is believed to be ubiquinone. Couples the redox reaction to proton translocation (for every two electrons transferred, four hydrogen ions are translocated across the cytoplasmic membrane), and thus conserves the redox energy in a proton gradient. The sequence is that of NADH-quinone oxidoreductase subunit I from Xanthomonas oryzae pv. oryzae (strain KACC10331 / KXO85).